The primary structure comprises 440 residues: Lysine histidine transporter-like 6 (440 aa).

Positions 1–10 (MVSSSPVSPS) are enriched in polar residues. The tract at residues 1 to 25 (MVSSSPVSPSKETDRKSGEKWTAED) is disordered. At 1-31 (MVSSSPVSPSKETDRKSGEKWTAEDPSRPAK) the chain is on the cytoplasmic side. The segment covering 11–25 (KETDRKSGEKWTAED) has biased composition (basic and acidic residues). Residues 32 to 51 (WWYSTFHTVTAMIGAGVLSL) traverse the membrane as a helical segment. The Extracellular segment spans residues 52-61 (PYAMAYLGWG). Residues 62–82 (PGTFVLAMTWGLTLNTMWQMV) traverse the membrane as a helical segment. The Cytoplasmic portion of the chain corresponds to 83-109 (QLHECVPGTRFDRYIDLGRYAFGPKLG). The helical transmembrane segment at 110–130 (PWIVLPQQLIVQVGCNIVYMV) threads the bilayer. The Extracellular segment spans residues 131-152 (TGGKCLKQFVEITCSTCTPVRQ). The helical transmembrane segment at 153–173 (SYWILGFGGVHFILSQLPNFN) threads the bilayer. Serine 174 is a topological domain (cytoplasmic). A helical membrane pass occupies residues 175–195 (VAGVSLAAAVMSLCYSTIAWG). The Extracellular portion of the chain corresponds to 196-221 (GSIAHGRVPDVSYDYKATNPGDFTFR). A helical transmembrane segment spans residues 222–242 (VFNALGQISFAFAGHAVALEI). The Cytoplasmic portion of the chain corresponds to 243–261 (QATMPSTPERPSKVPMWQG). A helical membrane pass occupies residues 262-282 (VIGAYVVNAVCYFPVALICYW). Topologically, residues 283–300 (AFGQDVDDNVLMNLQRPA) are extracellular. A helical membrane pass occupies residues 301-321 (WLIAAANLMVVVHVIGSYQVF). The Cytoplasmic portion of the chain corresponds to 322–353 (AMPVFDLLERMMVNKFGFKHGVVLRFFTRTIY). 2 helical membrane-spanning segments follow: residues 354–374 (VAFT…LGFF) and 375–395 (GGFG…LIIK). Residues 396–399 (KPRR) lie on the Cytoplasmic side of the membrane. A helical membrane pass occupies residues 400 to 420 (FSVTWFVNWISIIVGVFIMLA). Over 421–440 (STIGGLRNIIADSSTYSFYA) the chain is Extracellular.

This sequence belongs to the amino acid/polyamine transporter 2 family. Amino acid/auxin permease (AAAP) (TC 2.A.18.2) subfamily.

It is found in the cell membrane. In terms of biological role, amino acid transporter. This is Lysine histidine transporter-like 6 from Arabidopsis thaliana (Mouse-ear cress).